The chain runs to 305 residues: Probable 5-dehydro-4-deoxyglucarate dehydratase (305 aa).

The protein belongs to the DapA family.

It catalyses the reaction 5-dehydro-4-deoxy-D-glucarate + H(+) = 2,5-dioxopentanoate + CO2 + H2O. It participates in carbohydrate acid metabolism; D-glucarate degradation; 2,5-dioxopentanoate from D-glucarate: step 2/2. This is Probable 5-dehydro-4-deoxyglucarate dehydratase from Xanthomonas campestris pv. campestris (strain B100).